The chain runs to 591 residues: Aspartate--tRNA ligase (591 aa).

Glu171 is an L-aspartate binding site. An aspartate region spans residues 195–198; sequence QLFK. Residue Arg217 participates in L-aspartate binding. ATP contacts are provided by residues 217–219 and Gln226; that span reads RDE. His448 contributes to the L-aspartate binding site. Glu482 provides a ligand contact to ATP. Residue Arg489 participates in L-aspartate binding. 534-537 is a binding site for ATP; that stretch reads GLDR.

This sequence belongs to the class-II aminoacyl-tRNA synthetase family. Type 1 subfamily. In terms of assembly, homodimer.

It is found in the cytoplasm. It catalyses the reaction tRNA(Asp) + L-aspartate + ATP = L-aspartyl-tRNA(Asp) + AMP + diphosphate. Its function is as follows. Catalyzes the attachment of L-aspartate to tRNA(Asp) in a two-step reaction: L-aspartate is first activated by ATP to form Asp-AMP and then transferred to the acceptor end of tRNA(Asp). This is Aspartate--tRNA ligase from Aliivibrio fischeri (strain MJ11) (Vibrio fischeri).